A 293-amino-acid chain; its full sequence is Ribosomal protein L11 methyltransferase (293 aa).

Positions 145, 166, 188, and 230 each coordinate S-adenosyl-L-methionine.

This sequence belongs to the methyltransferase superfamily. PrmA family.

It localises to the cytoplasm. The catalysed reaction is L-lysyl-[protein] + 3 S-adenosyl-L-methionine = N(6),N(6),N(6)-trimethyl-L-lysyl-[protein] + 3 S-adenosyl-L-homocysteine + 3 H(+). Functionally, methylates ribosomal protein L11. The protein is Ribosomal protein L11 methyltransferase of Enterobacter sp. (strain 638).